Consider the following 373-residue polypeptide: Methionine import ATP-binding protein MetN 1 (373 aa).

One can recognise an ABC transporter domain in the interval 29–270 (ILIDRVRKVY…PRHEVTRRFV (242 aa)). 67–74 (GRSGAGKS) contacts ATP.

Belongs to the ABC transporter superfamily. Methionine importer (TC 3.A.1.24) family. In terms of assembly, the complex is composed of two ATP-binding proteins (MetN), two transmembrane proteins (MetI) and a solute-binding protein (MetQ).

Its subcellular location is the cell inner membrane. It catalyses the reaction L-methionine(out) + ATP + H2O = L-methionine(in) + ADP + phosphate + H(+). It carries out the reaction D-methionine(out) + ATP + H2O = D-methionine(in) + ADP + phosphate + H(+). Part of the ABC transporter complex MetNIQ involved in methionine import. Responsible for energy coupling to the transport system. This is Methionine import ATP-binding protein MetN 1 from Rhodopseudomonas palustris (strain ATCC BAA-98 / CGA009).